A 475-amino-acid chain; its full sequence is Aspartyl/glutamyl-tRNA(Asn/Gln) amidotransferase subunit B (475 aa).

It belongs to the GatB/GatE family. GatB subfamily. In terms of assembly, heterotrimer of A, B and C subunits.

The enzyme catalyses L-glutamyl-tRNA(Gln) + L-glutamine + ATP + H2O = L-glutaminyl-tRNA(Gln) + L-glutamate + ADP + phosphate + H(+). It carries out the reaction L-aspartyl-tRNA(Asn) + L-glutamine + ATP + H2O = L-asparaginyl-tRNA(Asn) + L-glutamate + ADP + phosphate + 2 H(+). Allows the formation of correctly charged Asn-tRNA(Asn) or Gln-tRNA(Gln) through the transamidation of misacylated Asp-tRNA(Asn) or Glu-tRNA(Gln) in organisms which lack either or both of asparaginyl-tRNA or glutaminyl-tRNA synthetases. The reaction takes place in the presence of glutamine and ATP through an activated phospho-Asp-tRNA(Asn) or phospho-Glu-tRNA(Gln). The chain is Aspartyl/glutamyl-tRNA(Asn/Gln) amidotransferase subunit B from Macrococcus caseolyticus (strain JCSC5402) (Macrococcoides caseolyticum).